The primary structure comprises 333 residues: Ribosomal protein L11 methyltransferase (333 aa).

The S-adenosyl-L-methionine site is built by Thr160, Gly181, Asp203, and Asn267.

The protein belongs to the methyltransferase superfamily. PrmA family.

It localises to the cytoplasm. It carries out the reaction L-lysyl-[protein] + 3 S-adenosyl-L-methionine = N(6),N(6),N(6)-trimethyl-L-lysyl-[protein] + 3 S-adenosyl-L-homocysteine + 3 H(+). Its function is as follows. Methylates ribosomal protein L11. The sequence is that of Ribosomal protein L11 methyltransferase from Lachnoclostridium phytofermentans (strain ATCC 700394 / DSM 18823 / ISDg) (Clostridium phytofermentans).